The following is a 173-amino-acid chain: Shikimate kinase (173 aa).

An ATP-binding site is contributed by glycine 16 to threonine 21. Threonine 20 provides a ligand contact to Mg(2+). Residues aspartate 38, arginine 62, and glycine 83 each contribute to the substrate site. Position 120 (arginine 120) interacts with ATP. Arginine 139 contributes to the substrate binding site. Arginine 156 contacts ATP.

It belongs to the shikimate kinase family. In terms of assembly, monomer. Mg(2+) is required as a cofactor.

Its subcellular location is the cytoplasm. It catalyses the reaction shikimate + ATP = 3-phosphoshikimate + ADP + H(+). Its pathway is metabolic intermediate biosynthesis; chorismate biosynthesis; chorismate from D-erythrose 4-phosphate and phosphoenolpyruvate: step 5/7. Catalyzes the specific phosphorylation of the 3-hydroxyl group of shikimic acid using ATP as a cosubstrate. The protein is Shikimate kinase of Corynebacterium diphtheriae (strain ATCC 700971 / NCTC 13129 / Biotype gravis).